Here is a 311-residue protein sequence, read N- to C-terminus: MQDNQKVKKKEQYNLNKLQKRLRRNVGEAIADFNMIEEGDRIMVCLSGGKDSYTMLEILRNLQQSAPINFSLVAVNLDQKQPGFPEHILPAYLEQLGVEYKIVEENTYGIVKEKIPEGKTTCSLCSRLRRGILYRTATELGATKIALGHHRDDILQTLFLNMFYGGKMKGMPPKLMSDDGKHIVIRPLAYCREKDIVRFAEAKAFPIIPCNLCGSQPNLQRQVIADMLRDWDKRYPGRIETMFSAMQDIVPSHLCDTNLFDFKGIAHGSEVVDGGDLAFDREEIPLQPAGWQPEEDDTPLETLRLDVIEVK.

The PP-loop motif signature appears at S47–S52. Residues C122, C125, and C213 each contribute to the [4Fe-4S] cluster site.

Belongs to the TtcA family. As to quaternary structure, homodimer. It depends on Mg(2+) as a cofactor. [4Fe-4S] cluster serves as cofactor.

It is found in the cytoplasm. It carries out the reaction cytidine(32) in tRNA + S-sulfanyl-L-cysteinyl-[cysteine desulfurase] + AH2 + ATP = 2-thiocytidine(32) in tRNA + L-cysteinyl-[cysteine desulfurase] + A + AMP + diphosphate + H(+). It functions in the pathway tRNA modification. Its function is as follows. Catalyzes the ATP-dependent 2-thiolation of cytidine in position 32 of tRNA, to form 2-thiocytidine (s(2)C32). The sulfur atoms are provided by the cysteine/cysteine desulfurase (IscS) system. This chain is tRNA-cytidine(32) 2-sulfurtransferase, found in Salmonella arizonae (strain ATCC BAA-731 / CDC346-86 / RSK2980).